Reading from the N-terminus, the 297-residue chain is 33 kDa chaperonin (297 aa).

Intrachain disulfides connect Cys-232–Cys-234 and Cys-266–Cys-269.

Belongs to the HSP33 family. In terms of processing, under oxidizing conditions two disulfide bonds are formed involving the reactive cysteines. Under reducing conditions zinc is bound to the reactive cysteines and the protein is inactive.

It localises to the cytoplasm. Functionally, redox regulated molecular chaperone. Protects both thermally unfolding and oxidatively damaged proteins from irreversible aggregation. Plays an important role in the bacterial defense system toward oxidative stress. This is 33 kDa chaperonin from Pseudomonas aeruginosa (strain UCBPP-PA14).